Reading from the N-terminus, the 317-residue chain is (R)-citramalyl-CoA lyase (317 aa).

The Pyruvate carboxyltransferase domain occupies 4–281 (VTIVDVAPRD…PTGIDLSALI (278 aa)). Residue Arg12 participates in substrate binding. Residues Asp13, His214, and His216 each coordinate a divalent metal cation. Cys247 is an active-site residue. Asn256 lines the a divalent metal cation pocket.

Belongs to the HMG-CoA lyase family. As to quaternary structure, homodimer. It depends on Mn(2+) as a cofactor. The cofactor is Co(2+). Ni(2+) is required as a cofactor. Mg(2+) serves as cofactor.

The catalysed reaction is (3R)-citramalyl-CoA = pyruvate + acetyl-CoA. With respect to regulation, activated by dithioerythritol (DTE) (in vitro). Functionally, involved in the glyoxylate assimilation cycle used to regenerate acetyl-CoA and produce pyruvate as universal precursor for biosynthesis. Catalyzes the cleavage of (R)-citramalyl-CoA to yield acetyl-CoA and pyruvate. In Chloroflexus aurantiacus (strain ATCC 29366 / DSM 635 / J-10-fl), this protein is (R)-citramalyl-CoA lyase (ccl).